The sequence spans 158 residues: 6,7-dimethyl-8-ribityllumazine synthase (158 aa).

5-amino-6-(D-ribitylamino)uracil-binding positions include Phe-22, Ala-57–Glu-59, and Ala-81–Ile-83. Position 86 to 87 (Gly-86 to Thr-87) interacts with (2S)-2-hydroxy-3-oxobutyl phosphate. Catalysis depends on His-89, which acts as the Proton donor. Phe-114 contacts 5-amino-6-(D-ribitylamino)uracil. Arg-128 lines the (2S)-2-hydroxy-3-oxobutyl phosphate pocket.

This sequence belongs to the DMRL synthase family. In terms of assembly, forms an icosahedral capsid composed of 60 subunits, arranged as a dodecamer of pentamers.

The enzyme catalyses (2S)-2-hydroxy-3-oxobutyl phosphate + 5-amino-6-(D-ribitylamino)uracil = 6,7-dimethyl-8-(1-D-ribityl)lumazine + phosphate + 2 H2O + H(+). Its pathway is cofactor biosynthesis; riboflavin biosynthesis; riboflavin from 2-hydroxy-3-oxobutyl phosphate and 5-amino-6-(D-ribitylamino)uracil: step 1/2. Catalyzes the formation of 6,7-dimethyl-8-ribityllumazine by condensation of 5-amino-6-(D-ribitylamino)uracil with 3,4-dihydroxy-2-butanone 4-phosphate. This is the penultimate step in the biosynthesis of riboflavin. In Shewanella piezotolerans (strain WP3 / JCM 13877), this protein is 6,7-dimethyl-8-ribityllumazine synthase.